Reading from the N-terminus, the 290-residue chain is 4-hydroxy-tetrahydrodipicolinate synthase (290 aa).

Position 44 (Thr44) interacts with pyruvate. The active-site Proton donor/acceptor is the Tyr131. The Schiff-base intermediate with substrate role is filled by Lys159. A pyruvate-binding site is contributed by Ile201.

Belongs to the DapA family. In terms of assembly, homotetramer; dimer of dimers.

It is found in the cytoplasm. The enzyme catalyses L-aspartate 4-semialdehyde + pyruvate = (2S,4S)-4-hydroxy-2,3,4,5-tetrahydrodipicolinate + H2O + H(+). The protein operates within amino-acid biosynthesis; L-lysine biosynthesis via DAP pathway; (S)-tetrahydrodipicolinate from L-aspartate: step 3/4. Its function is as follows. Catalyzes the condensation of (S)-aspartate-beta-semialdehyde [(S)-ASA] and pyruvate to 4-hydroxy-tetrahydrodipicolinate (HTPA). The polypeptide is 4-hydroxy-tetrahydrodipicolinate synthase (Jannaschia sp. (strain CCS1)).